A 216-amino-acid polypeptide reads, in one-letter code: GTP-binding nuclear protein Ran, testis-specific isoform (216 aa).

Alanine 2 carries the post-translational modification N-acetylalanine. One can recognise a Small GTPase Ran-type domain in the interval 7–171 (PQVQFKVVLV…FWLARKLIGD (165 aa)). 17 to 24 (GDGGTGKT) is a binding site for GTP. The residue at position 24 (threonine 24) is a Phosphothreonine. The interval 37-45 (KEYVATLGV) is switch-I. Lysine 60 bears the N6-acetyllysine mark. Residue 65-69 (DTAGQ) coordinates GTP. The segment at 68 to 84 (GQEKFGGLRDGYYIQAQ) is switch-II. Lysine 71 is subject to N6-acetyllysine; alternate. Residue lysine 71 forms a Glycyl lysine isopeptide (Lys-Gly) (interchain with G-Cter in SUMO2); alternate linkage. A Glycyl lysine isopeptide (Lys-Gly) (interchain with G-Cter in ubiquitin); alternate cross-link involves residue lysine 71. The residue at position 99 (lysine 99) is an N6-acetyllysine. 122–125 (NKVD) lines the GTP pocket. N6-acetyllysine is present on lysine 134. Lysine 159 carries the post-translational modification N6-acetyllysine; alternate. Residue lysine 159 is modified to N6-succinyllysine; alternate.

Belongs to the small GTPase superfamily. Ran family. In terms of tissue distribution, testis specific.

It localises to the nucleus. The catalysed reaction is GTP + H2O = GDP + phosphate + H(+). In terms of biological role, GTP-binding protein involved in nucleocytoplasmic transport. Required for the import of protein into the nucleus and also for RNA export. Involved in chromatin condensation and control of cell cycle. In Mus musculus (Mouse), this protein is GTP-binding nuclear protein Ran, testis-specific isoform (Rasl2-9).